We begin with the raw amino-acid sequence, 101 residues long: Small ribosomal subunit protein uS14 (101 aa).

Belongs to the universal ribosomal protein uS14 family. Part of the 30S ribosomal subunit. Contacts proteins S3 and S10.

Functionally, binds 16S rRNA, required for the assembly of 30S particles and may also be responsible for determining the conformation of the 16S rRNA at the A site. The polypeptide is Small ribosomal subunit protein uS14 (Histophilus somni (strain 2336) (Haemophilus somnus)).